A 266-amino-acid polypeptide reads, in one-letter code: Undecaprenyl-diphosphatase (266 aa).

A run of 7 helical transmembrane segments spans residues 41–61 (YAYS…LIYF), 82–102 (LVYI…LYYV), 106–126 (WLVV…AVVL), 159–179 (AVSV…LLLL), 191–211 (FVLV…SEGG), 213–233 (VATA…IITI), and 246–266 (VLVN…RIIF).

The protein belongs to the UppP family.

Its subcellular location is the cell membrane. The catalysed reaction is di-trans,octa-cis-undecaprenyl diphosphate + H2O = di-trans,octa-cis-undecaprenyl phosphate + phosphate + H(+). Functionally, catalyzes the dephosphorylation of undecaprenyl diphosphate (UPP). The polypeptide is Undecaprenyl-diphosphatase (Pyrobaculum aerophilum (strain ATCC 51768 / DSM 7523 / JCM 9630 / CIP 104966 / NBRC 100827 / IM2)).